Reading from the N-terminus, the 187-residue chain is Reactive Intermediate Deaminase A, chloroplastic (187 aa).

Residues 1-58 constitute a chloroplast transit peptide; sequence MTWSVFRSINTPTLDLSTALRSTRTPLVAAGVGCATFAGVSLFRMSSRSPPFASLSVS. Residue R165 participates in substrate binding.

This sequence belongs to the RutC family. In terms of tissue distribution, expressed in leaves, petiols, petals, carpels and shoot apex.

It localises to the plastid. Its subcellular location is the chloroplast. The catalysed reaction is 2-iminobutanoate + H2O = 2-oxobutanoate + NH4(+). It carries out the reaction 2-iminopropanoate + H2O = pyruvate + NH4(+). It functions in the pathway amino-acid biosynthesis; L-isoleucine biosynthesis; 2-oxobutanoate from L-threonine. Its function is as follows. Hydrolyzes the Ser-derived enamine/imine product of Thr dehydratase, protecting the plastidial branched-chain aminotransferase BCAT3 (AC Q9M401) from inactivation. Involved in Ile biosynthesis. This chain is Reactive Intermediate Deaminase A, chloroplastic, found in Arabidopsis thaliana (Mouse-ear cress).